Consider the following 793-residue polypeptide: Protein PAT1 homolog (793 aa).

2 positions are modified to phosphoserine: Ser-200 and Ser-208. Disordered regions lie at residues 203-256 (PPGS…TGNR) and 292-312 (MLQQ…GSQN). Polar residues predominate over residues 219–242 (PYQSGGPQMGSPNFSPFPNLQPQL). Phosphoserine occurs at positions 342 and 343. Residues 476 to 501 (RPLLEVDPPNSAKFGNAEHKPTDKPL) form a disordered region. Positions 491-501 (NAEHKPTDKPL) are enriched in basic and acidic residues.

In terms of assembly, interacts with MPK4 and SUMM2. In terms of processing, phosphorylated at Ser-208 by MPK4 upon flg22 elicitation. Phosphorylated at Ser-200, Ser-342 and Ser-343 upon flg22 elicitation.

It localises to the cytoplasm. The protein localises to the P-body. Its function is as follows. Activator of mRNA decapping. Involved in mRNA decay via decapping. Involved in disease resistance in response to biotrophic and necrotrophic pathogens. Is part of a signaling pathway including MPK4 and the disease resistance protein SUMM2. In Arabidopsis thaliana (Mouse-ear cress), this protein is Protein PAT1 homolog.